A 470-amino-acid polypeptide reads, in one-letter code: GDP-Man:Man(3)GlcNAc(2)-PP-Dol alpha-1,2-mannosyltransferase (470 aa).

Residues 1 to 15 lie on the Lumenal side of the membrane; that stretch reads MSDTVISLISHSITT. A helical transmembrane segment spans residues 16–36; that stretch reads VFYLVPLIIALIIPFSLYSGF. Over 37-131 the chain is Cytoplasmic; it reads RRKSKTVAFF…HYKHCTMLFQ (95 aa). An intramembrane region (helical) is located at residues 132–152; sequence ALAGLILALEAWFRMVPAVFI. The Cytoplasmic portion of the chain corresponds to 153–378; it reads DSMGYPLSLP…ISIHTMHNEH (226 aa). The helical intramembrane region spans 379–399; the sequence is FGISVVEAMAASTIILSNDSG. Topologically, residues 400-470 are cytoplasmic; sequence GPRMDIVKDY…HWNKEIEKVL (71 aa).

This sequence belongs to the glycosyltransferase group 1 family. Glycosyltransferase 4 subfamily.

It localises to the endoplasmic reticulum membrane. The enzyme catalyses an alpha-D-Man-(1-&gt;3)-[alpha-D-Man-(1-&gt;6)]-beta-D-Man-(1-&gt;4)-beta-D-GlcNAc-(1-&gt;4)-alpha-D-GlcNAc-diphospho-di-trans,poly-cis-dolichol + 2 GDP-alpha-D-mannose = an alpha-D-Man-(1-&gt;2)-alpha-D-Man-(1-&gt;2)-alpha-D-Man-(1-&gt;3)-[alpha-D-Man-(1-&gt;6)]-beta-D-Man-(1-&gt;4)-beta-D-GlcNAc-(1-&gt;4)-alpha-D-GlcNAc-diphospho-di-trans,poly-cis-dolichol + 2 GDP + 2 H(+). Its pathway is protein modification; protein glycosylation. GDP-Man:Man(3)GlcNAc(2)-PP-Dol alpha-1,2-mannosyltransferase that operates in the biosynthetic pathway of dolichol-linked oligosaccharides, the glycan precursors employed in protein asparagine (N)-glycosylation. The assembly of dolichol-linked oligosaccharides begins on the cytosolic side of the endoplasmic reticulum membrane and finishes in its lumen. The sequential addition of sugars to dolichol pyrophosphate produces dolichol-linked oligosaccharides containing fourteen sugars, including two GlcNAcs, nine mannoses and three glucoses. Once assembled, the oligosaccharide is transferred from the lipid to nascent proteins by oligosaccharyltransferases. Catalyzes, on the cytoplasmic face of the endoplasmic reticulum, the addition of the fourth and fifth mannose residues to the dolichol-linked oligosaccharide chain, to produce Man(5)GlcNAc(2)-PP-dolichol core oligosaccharide. Man(5)GlcNAc(2)-PP-dolichol is a substrate for ALG3, the following enzyme in the biosynthetic pathway. In Caenorhabditis elegans, this protein is GDP-Man:Man(3)GlcNAc(2)-PP-Dol alpha-1,2-mannosyltransferase.